The chain runs to 48 residues: Sperm protamine R3 isoform 2 (48 aa).

Basic residues predominate over residues 1-29; sequence ARRRHSMKKKRKSVRRRKTRKNQRKRKNS. Residues 1–48 form a disordered region; it reads ARRRHSMKKKRKSVRRRKTRKNQRKRKNSLGRSFKAHGFLKQPPRFRP.

As to expression, testis.

It is found in the nucleus. Its subcellular location is the chromosome. Protamines substitute for histones in the chromatin of sperm during the haploid phase of spermatogenesis. They compact sperm DNA into a highly condensed, stable and inactive complex. The protein is Sperm protamine R3 isoform 2 of Hydrolagus colliei (Spotted ratfish).